The following is a 274-amino-acid chain: 2,3,4,5-tetrahydropyridine-2,6-dicarboxylate N-succinyltransferase (274 aa).

Positions 104 and 141 each coordinate substrate.

The protein belongs to the transferase hexapeptide repeat family. In terms of assembly, homotrimer.

Its subcellular location is the cytoplasm. It carries out the reaction (S)-2,3,4,5-tetrahydrodipicolinate + succinyl-CoA + H2O = (S)-2-succinylamino-6-oxoheptanedioate + CoA. Its pathway is amino-acid biosynthesis; L-lysine biosynthesis via DAP pathway; LL-2,6-diaminopimelate from (S)-tetrahydrodipicolinate (succinylase route): step 1/3. This Enterobacter sp. (strain 638) protein is 2,3,4,5-tetrahydropyridine-2,6-dicarboxylate N-succinyltransferase.